Here is a 176-residue protein sequence, read N- to C-terminus: Glutathione-regulated potassium-efflux system ancillary protein KefF (176 aa).

FMN contacts are provided by residues His8, 14–17 (SHAN), 65–68 (MQWY), and 105–108 (TTGG).

The protein belongs to the NAD(P)H dehydrogenase (quinone) family. KefF subfamily. As to quaternary structure, homodimer. Interacts with KefC. FMN serves as cofactor.

Its subcellular location is the cell inner membrane. It carries out the reaction a quinone + NADH + H(+) = a quinol + NAD(+). It catalyses the reaction a quinone + NADPH + H(+) = a quinol + NADP(+). In terms of biological role, regulatory subunit of a potassium efflux system that confers protection against electrophiles. Required for full activity of KefC. Shows redox enzymatic activity, but this enzymatic activity is not required for activation of KefC. This Salmonella gallinarum (strain 287/91 / NCTC 13346) protein is Glutathione-regulated potassium-efflux system ancillary protein KefF.